The sequence spans 424 residues: Tyrosine--tRNA ligase (424 aa).

An L-tyrosine-binding site is contributed by Y37. The 'HIGH' region motif lies at 42 to 51; it reads PTADSLHLGH. Y175 and Q179 together coordinate L-tyrosine. Positions 235 to 239 match the 'KMSKS' region motif; that stretch reads KFGKT. K238 provides a ligand contact to ATP. One can recognise an S4 RNA-binding domain in the interval 357 to 414; it reads ADLMQALVDAELQPSRGQARKTIASNAVTINGEKQSDPEYIFNDEDRLFGRYTLLRRG.

The protein belongs to the class-I aminoacyl-tRNA synthetase family. TyrS type 1 subfamily. As to quaternary structure, homodimer.

It is found in the cytoplasm. It catalyses the reaction tRNA(Tyr) + L-tyrosine + ATP = L-tyrosyl-tRNA(Tyr) + AMP + diphosphate + H(+). Catalyzes the attachment of tyrosine to tRNA(Tyr) in a two-step reaction: tyrosine is first activated by ATP to form Tyr-AMP and then transferred to the acceptor end of tRNA(Tyr). This Salmonella enteritidis PT4 (strain P125109) protein is Tyrosine--tRNA ligase.